Reading from the N-terminus, the 197-residue chain is Peptide deformylase (197 aa).

Residues Cys-106 and His-148 each contribute to the Fe cation site. Glu-149 is a catalytic residue. His-152 lines the Fe cation pocket.

This sequence belongs to the polypeptide deformylase family. Fe(2+) is required as a cofactor.

It catalyses the reaction N-terminal N-formyl-L-methionyl-[peptide] + H2O = N-terminal L-methionyl-[peptide] + formate. Its function is as follows. Removes the formyl group from the N-terminal Met of newly synthesized proteins. Requires at least a dipeptide for an efficient rate of reaction. N-terminal L-methionine is a prerequisite for activity but the enzyme has broad specificity at other positions. The sequence is that of Peptide deformylase from Mycobacterium marinum (strain ATCC BAA-535 / M).